Reading from the N-terminus, the 205-residue chain is Protein N-terminal glutamine amidohydrolase (205 aa).

Catalysis depends on residues Cys28, His81, and Asp97.

The protein belongs to the NTAQ1 family. Monomer.

It localises to the cytoplasm. Its subcellular location is the cytosol. The protein localises to the nucleus. The enzyme catalyses N-terminal L-glutaminyl-[protein] + H2O = N-terminal L-glutamyl-[protein] + NH4(+). Mediates the side-chain deamidation of N-terminal glutamine residues to glutamate, an important step in N-end rule pathway of protein degradation. Conversion of the resulting N-terminal glutamine to glutamate renders the protein susceptible to arginylation, polyubiquitination and degradation as specified by the N-end rule. Does not act on substrates with internal or C-terminal glutamine and does not act on non-glutamine residues in any position. Does not deaminate acetylated N-terminal glutamine. With the exception of proline, all tested second-position residues on substrate peptides do not greatly influence the activity. In contrast, a proline at position 2, virtually abolishes deamidation of N-terminal glutamine. The sequence is that of Protein N-terminal glutamine amidohydrolase from Homo sapiens (Human).